The following is a 259-amino-acid chain: Diphthine synthase (259 aa).

S-adenosyl-L-methionine contacts are provided by residues Leu9, Asp85, Val88, 113–114 (TA), Leu168, Ala209, and His234.

This sequence belongs to the diphthine synthase family. Homodimer.

It carries out the reaction 2-[(3S)-amino-3-carboxypropyl]-L-histidyl-[translation elongation factor 2] + 3 S-adenosyl-L-methionine = diphthine-[translation elongation factor 2] + 3 S-adenosyl-L-homocysteine + 3 H(+). It functions in the pathway protein modification; peptidyl-diphthamide biosynthesis. Functionally, S-adenosyl-L-methionine-dependent methyltransferase that catalyzes the trimethylation of the amino group of the modified target histidine residue in translation elongation factor 2 (EF-2), to form an intermediate called diphthine. The three successive methylation reactions represent the second step of diphthamide biosynthesis. This Haloarcula marismortui (strain ATCC 43049 / DSM 3752 / JCM 8966 / VKM B-1809) (Halobacterium marismortui) protein is Diphthine synthase.